The primary structure comprises 667 residues: UvrABC system protein B (667 aa).

The Helicase ATP-binding domain occupies Thr-25–Pro-414. Residue Gly-38 to Thr-45 participates in ATP binding. The short motif at Tyr-91–Ile-114 is the Beta-hairpin element. Residues Gln-430 to Leu-596 enclose the Helicase C-terminal domain. One can recognise a UVR domain in the interval Lys-624–Leu-659.

This sequence belongs to the UvrB family. As to quaternary structure, forms a heterotetramer with UvrA during the search for lesions. Interacts with UvrC in an incision complex.

The protein localises to the cytoplasm. Its function is as follows. The UvrABC repair system catalyzes the recognition and processing of DNA lesions. A damage recognition complex composed of 2 UvrA and 2 UvrB subunits scans DNA for abnormalities. Upon binding of the UvrA(2)B(2) complex to a putative damaged site, the DNA wraps around one UvrB monomer. DNA wrap is dependent on ATP binding by UvrB and probably causes local melting of the DNA helix, facilitating insertion of UvrB beta-hairpin between the DNA strands. Then UvrB probes one DNA strand for the presence of a lesion. If a lesion is found the UvrA subunits dissociate and the UvrB-DNA preincision complex is formed. This complex is subsequently bound by UvrC and the second UvrB is released. If no lesion is found, the DNA wraps around the other UvrB subunit that will check the other stand for damage. The chain is UvrABC system protein B from Syntrophotalea carbinolica (strain DSM 2380 / NBRC 103641 / GraBd1) (Pelobacter carbinolicus).